We begin with the raw amino-acid sequence, 299 residues long: MFQPKPLVIVLIGPTASGKTELGIEIAKYFNLNIHNVDSRQLYRFMDIGTAKPTKEQQKTIKHFLIDLEEPSSQVNAKQFQEIATKSINRELNQNRIPFLIGGSGLYMNSIIKGFFAPNVPPQKVLRSQFEKLGQEKCWELLKICDPVLTKKINYADQVRTIRALEVFYVTGKPISSQKFQNPPPWKILELGLYREDLKERIFKRTKNMFEFGIIDETKKIINQYGSNLPLLETIGYREAKDVIKENLKLEKAIEITTTKTIQFAKRQKTWFRNKNNPIWLNNKNLLKDAIINIKHALR.

13–20 is an ATP binding site; it reads GPTASGKT. 15–20 provides a ligand contact to substrate; sequence TASGKT. Residues 38-41 form an interaction with substrate tRNA region; sequence DSRQ.

It belongs to the IPP transferase family. In terms of assembly, monomer. Mg(2+) serves as cofactor.

It catalyses the reaction adenosine(37) in tRNA + dimethylallyl diphosphate = N(6)-dimethylallyladenosine(37) in tRNA + diphosphate. Its function is as follows. Catalyzes the transfer of a dimethylallyl group onto the adenine at position 37 in tRNAs that read codons beginning with uridine, leading to the formation of N6-(dimethylallyl)adenosine (i(6)A). This chain is tRNA dimethylallyltransferase, found in Prochlorococcus marinus subsp. pastoris (strain CCMP1986 / NIES-2087 / MED4).